The chain runs to 209 residues: dTTP/UTP pyrophosphatase (209 aa).

Catalysis depends on Asp-88, which acts as the Proton acceptor.

This sequence belongs to the Maf family. YhdE subfamily. The cofactor is a divalent metal cation.

Its subcellular location is the cytoplasm. It carries out the reaction dTTP + H2O = dTMP + diphosphate + H(+). The catalysed reaction is UTP + H2O = UMP + diphosphate + H(+). Its function is as follows. Nucleoside triphosphate pyrophosphatase that hydrolyzes dTTP and UTP. May have a dual role in cell division arrest and in preventing the incorporation of modified nucleotides into cellular nucleic acids. The sequence is that of dTTP/UTP pyrophosphatase from Burkholderia mallei (strain ATCC 23344).